The following is a 292-amino-acid chain: 4-hydroxy-tetrahydrodipicolinate synthase (292 aa).

Thr45 lines the pyruvate pocket. Tyr133 (proton donor/acceptor) is an active-site residue. Residue Lys162 is the Schiff-base intermediate with substrate of the active site. Ile204 contacts pyruvate.

This sequence belongs to the DapA family. As to quaternary structure, homotetramer; dimer of dimers.

It localises to the cytoplasm. It catalyses the reaction L-aspartate 4-semialdehyde + pyruvate = (2S,4S)-4-hydroxy-2,3,4,5-tetrahydrodipicolinate + H2O + H(+). The protein operates within amino-acid biosynthesis; L-lysine biosynthesis via DAP pathway; (S)-tetrahydrodipicolinate from L-aspartate: step 3/4. Catalyzes the condensation of (S)-aspartate-beta-semialdehyde [(S)-ASA] and pyruvate to 4-hydroxy-tetrahydrodipicolinate (HTPA). The sequence is that of 4-hydroxy-tetrahydrodipicolinate synthase from Maridesulfovibrio salexigens (strain ATCC 14822 / DSM 2638 / NCIMB 8403 / VKM B-1763) (Desulfovibrio salexigens).